The primary structure comprises 56 residues: Small ribosomal subunit protein uS14 (56 aa).

Zn(2+) contacts are provided by Cys-21, Cys-24, Cys-39, and Cys-42.

The protein belongs to the universal ribosomal protein uS14 family. As to quaternary structure, component of the 40S small ribosomal subunit. Zn(2+) is required as a cofactor.

It localises to the cytoplasm. Its subcellular location is the cytosol. The protein resides in the rough endoplasmic reticulum. The polypeptide is Small ribosomal subunit protein uS14 (RpS29) (Spodoptera frugiperda (Fall armyworm)).